A 125-amino-acid chain; its full sequence is Ribosome-binding factor A (125 aa).

Belongs to the RbfA family. Monomer. Binds 30S ribosomal subunits, but not 50S ribosomal subunits or 70S ribosomes.

It localises to the cytoplasm. In terms of biological role, one of several proteins that assist in the late maturation steps of the functional core of the 30S ribosomal subunit. Associates with free 30S ribosomal subunits (but not with 30S subunits that are part of 70S ribosomes or polysomes). Required for efficient processing of 16S rRNA. May interact with the 5'-terminal helix region of 16S rRNA. This is Ribosome-binding factor A from Thermosipho melanesiensis (strain DSM 12029 / CIP 104789 / BI429).